Consider the following 839-residue polypeptide: Phenylalanine--tRNA ligase beta subunit (839 aa).

Residues 42–166 (GELTGPIVIG…PPSVEGHQLV (125 aa)) enclose the tRNA-binding domain. Residues 421-496 (PEMPRQTINA…RKIGFDRIKA (76 aa)) enclose the B5 domain. The Mg(2+) site is built by aspartate 474, aspartate 480, glutamate 483, and glutamate 484. An FDX-ACB domain is found at 745-838 (SSFPVAKEDV…AEETCGAQLR (94 aa)).

It belongs to the phenylalanyl-tRNA synthetase beta subunit family. Type 1 subfamily. As to quaternary structure, tetramer of two alpha and two beta subunits. Requires Mg(2+) as cofactor.

Its subcellular location is the cytoplasm. It catalyses the reaction tRNA(Phe) + L-phenylalanine + ATP = L-phenylalanyl-tRNA(Phe) + AMP + diphosphate + H(+). The sequence is that of Phenylalanine--tRNA ligase beta subunit from Cutibacterium acnes (strain DSM 16379 / KPA171202) (Propionibacterium acnes).